The primary structure comprises 203 residues: Sec-independent protein translocase protein TatB (203 aa).

A helical membrane pass occupies residues 1–21 (MFDIGWTELLVIAVVLIVVVG). A disordered region spans residues 179–203 (KPKRTTAVRKPATLKKPAQTKKDEA).

It belongs to the TatB family. As to quaternary structure, the Tat system comprises two distinct complexes: a TatABC complex, containing multiple copies of TatA, TatB and TatC subunits, and a separate TatA complex, containing only TatA subunits. Substrates initially bind to the TatABC complex, which probably triggers association of the separate TatA complex to form the active translocon.

The protein resides in the cell inner membrane. Part of the twin-arginine translocation (Tat) system that transports large folded proteins containing a characteristic twin-arginine motif in their signal peptide across membranes. Together with TatC, TatB is part of a receptor directly interacting with Tat signal peptides. TatB may form an oligomeric binding site that transiently accommodates folded Tat precursor proteins before their translocation. The polypeptide is Sec-independent protein translocase protein TatB (Rhizobium johnstonii (strain DSM 114642 / LMG 32736 / 3841) (Rhizobium leguminosarum bv. viciae)).